The following is a 450-amino-acid chain: Glucose-6-phosphate isomerase (450 aa).

The Proton donor role is filled by E290. Catalysis depends on residues H311 and K425.

This sequence belongs to the GPI family.

The protein localises to the cytoplasm. The enzyme catalyses alpha-D-glucose 6-phosphate = beta-D-fructose 6-phosphate. It participates in carbohydrate biosynthesis; gluconeogenesis. The protein operates within carbohydrate degradation; glycolysis; D-glyceraldehyde 3-phosphate and glycerone phosphate from D-glucose: step 2/4. Its function is as follows. Catalyzes the reversible isomerization of glucose-6-phosphate to fructose-6-phosphate. This is Glucose-6-phosphate isomerase from Alkaliphilus metalliredigens (strain QYMF).